Consider the following 418-residue polypeptide: MAERFVVTGGNRLSGEVAVGGAKNSVLKLMAATLLAEGTSTITNCPDILDVPLMAEVLRGLGATVELDGDVARITAPDEPKYDADFAAVRQFRASVCVLGPLVGRCKRARVALPGGDAIGSRPLDMHQAGLRQLGAHCNIEHGCVVARAETLRGAEIQLEFPSVGATENILMAAVVAEGVTTIHNAAREPDVVDLCTMLNQMGAQVEGAGSPTMTITGVPRLHPTEHRVIGDRIVAATWGIAAAMTRGDISVAGVDPAHLQLVLHKLHDAGATVTQTDASFRVTQYERPKAVNVATLPFPGFPTDLQPMAIALASIADGTSMITENVFEARFRFVEEMIRLGADARTDGHHAVVRGLPQLSSAPVWCSDIRAGAGLVLAGLVADGDTEVHDVFHIDRGYPLFVENLVSLGAEIERVCC.

Lys-23 to Asn-24 lines the phosphoenolpyruvate pocket. Arg-93 contributes to the UDP-N-acetyl-alpha-D-glucosamine binding site. Residue Asp-117 is the Proton donor of the active site. UDP-N-acetyl-alpha-D-glucosamine-binding residues include Asp-305 and Val-327.

Belongs to the EPSP synthase family. MurA subfamily.

It is found in the cytoplasm. The enzyme catalyses phosphoenolpyruvate + UDP-N-acetyl-alpha-D-glucosamine = UDP-N-acetyl-3-O-(1-carboxyvinyl)-alpha-D-glucosamine + phosphate. It participates in cell wall biogenesis; peptidoglycan biosynthesis. In terms of biological role, cell wall formation. Adds enolpyruvyl to UDP-N-acetylglucosamine. The sequence is that of UDP-N-acetylglucosamine 1-carboxyvinyltransferase from Mycobacterium bovis (strain ATCC BAA-935 / AF2122/97).